Reading from the N-terminus, the 247-residue chain is Granulin (247 aa).

Belongs to the polyhedrin family.

Its function is as follows. Component of the virus occlusion bodies, which are large proteinaceous structures, that protect the virus from the outside environment for extended periods until they are ingested by insect larvae. The chain is Granulin from Pieris brassicae granulosis virus (PbGV).